The chain runs to 126 residues: Holo-[acyl-carrier-protein] synthase (126 aa).

Mg(2+) contacts are provided by D9 and E58.

This sequence belongs to the P-Pant transferase superfamily. AcpS family. Mg(2+) is required as a cofactor.

It localises to the cytoplasm. It catalyses the reaction apo-[ACP] + CoA = holo-[ACP] + adenosine 3',5'-bisphosphate + H(+). Functionally, transfers the 4'-phosphopantetheine moiety from coenzyme A to a Ser of acyl-carrier-protein. The polypeptide is Holo-[acyl-carrier-protein] synthase (Escherichia coli O127:H6 (strain E2348/69 / EPEC)).